Consider the following 421-residue polypeptide: Subtilisin-like protease 2 (421 aa).

The first 16 residues, 1-16 (MQLLNFGLLLLPFVAG), serve as a signal peptide directing secretion. Positions 17–122 (DLAPQPEPLL…VHPDQHFYLA (106 aa)) are excised as a propeptide. The 86-residue stretch at 36–121 (QYLVTLKEGL…SVHPDQHFYL (86 aa)) folds into the Inhibitor I9 domain. The Peptidase S8 domain maps to 131-421 (RWGLGYMSSK…ERKCKLPKYY (291 aa)). Asp-169 (charge relay system) is an active-site residue. The N-linked (GlcNAc...) asparagine glycan is linked to Asn-192. The active-site Charge relay system is the His-201. Asn-248, Asn-261, and Asn-348 each carry an N-linked (GlcNAc...) asparagine glycan. The active-site Charge relay system is the Ser-357. Residue Asn-388 is glycosylated (N-linked (GlcNAc...) asparagine).

This sequence belongs to the peptidase S8 family.

The protein localises to the secreted. In terms of biological role, secreted subtilisin-like serine protease with keratinolytic activity that contributes to pathogenicity. This is Subtilisin-like protease 2 (SUB2) from Trichophyton rubrum (Athlete's foot fungus).